The sequence spans 1218 residues: Protein STICHEL (1218 aa).

Positions 24 to 136 (AGRVLRDPGT…SDARNGGDSY (113 aa)) are disordered. 3 stretches are compositionally biased toward polar residues: residues 32 to 46 (GTTS…SSRS), 54 to 73 (ASRN…SSTN), and 86 to 95 (WKTQKSSSEK). The short motif at 163 to 180 (RKSNVGSCKKKSKKKISS) is the Bipartite nuclear localization signal element. 2 consecutive short sequence motifs (PEST) follow at residues 273–304 (RNPS…LPGR) and 425–449 (RSQD…ETIR). Residue 490-497 (GPRGTGKT) coordinates ATP. Zn(2+)-binding residues include Cys509, Cys518, Cys521, and Cys524. A coiled-coil region spans residues 762-788 (EADMEGLKHALKLLSEAEKQLRVSNDR). Positions 802–828 (MPSPGTTHTGSSRRQSSRATDDDPASV) are disordered. Residues 804–819 (SPGTTHTGSSRRQSSR) show a composition bias toward polar residues. 2 consecutive short sequence motifs (bipartite nuclear localization signal) follow at residues 1178–1195 (RRSK…SRRN) and 1196–1213 (RKSR…RKAE).

It belongs to the DnaX/STICHEL family. In terms of assembly, interacts with BLT. As to expression, ubiquitous.

It is found in the nucleus. Acts as a key regulator of trichome branching through an endoreduplication-independent pathway. The sequence is that of Protein STICHEL (STI) from Arabidopsis thaliana (Mouse-ear cress).